The sequence spans 173 residues: Pathogenesis-related protein 1A/1B (173 aa).

Positions 1–20 (MSTSAVLFLLLAVFAAGASA) are cleaved as a signal peptide.

This sequence belongs to the thaumatin family.

The protein is Pathogenesis-related protein 1A/1B of Hordeum vulgare (Barley).